We begin with the raw amino-acid sequence, 1257 residues long: MNFSNKPNKSRKKSNRKNKKSNKSNTQKFFNENIVVDCDLFGVSENITNNAKSMNQVFDNESGISKRVQKPSVKNINKKNLKSKQKNRPAYWAQFDAQRFDSIGDPSAPNELYQSCDKSKLADLERQLSYQGGWTQFNSDSSMSYGIVSDDKLTHNNMMPYFSAKSGYGSNDLLNTSVMNYKNSLFTGNLKDTWKHKQEIKPHFKPVADSSYIHGTPIYSDDVRQRYESQASKLRQGEKLFDSIQVTPGLNLRHDEKGTHGYHSMYRPLEKTVDELRVRPKITYEGRIIEGMRGQERAAQAPVITYKPDTYKTTTKDDLLPTSDIKKAPKVIDNFIMKDTARHDQHIEYTGGAYTGSNHVGRNVPEYMQEKYKESTRQNFLAPKPMQKHSKTDTKFNPNLKSYELPFTLKDQNIHNKHPGITSSIFGNTTYSNLTDSAKFTNKQLIAEKSVTNTNIGTNNMRGTVHCMDIANPTIKEISVENRLNPNINGFSTIHRTYNPEIAKATIKETVIDNLEPSNVGQNIGSYANLTHNLNETIKETTVEIPQNNFVVPVGQYQRTPGLQDTTNPTIRETTVGINRNSNILPIGQYQRAPDMQDIARTTMNETIITTPWNNHITPINQQQSAPHPQDLFRSTLKETTIDLNRNSNILPIGQYQRAPNLQDNFRTSTRETTIEIPRHSQIIPTGQYQRAPNLQDNTNPTIRETTVGISRNSQIIPINQYQRAPNLQDNLKTSLKEITNSISRNSQVLPVGQYQRTPNLQDLPNTNLKEITNSMTRNTQINPVGQYQRAPDLQDITNPTLREITGNIHRNSFVVPVNQQQRAPDLQDIMNPTLRETTVGIHRNNIIIPVSQQQGPTNLQNNNNTTLKEISMSKHRNSIITPINQHQRAPNNQDIARSTLKETSIGIHRNTNIVPIGQQQRTPNPQDILNPTLRETIKIPYNTNINAVGQQQGRTNLTDSARSTIKETVVSIPQNYVTTAVGQQQGKTIQDSLRQTLKELNLENNHNSNIGTRENNLGAAHSFNRQPLRSTTKESIVDVPQNTHMTAVGQLKHKAPLLDTVRTTMKENIIQIPYNSVVTAVNQSQGSSSSFNREPLNTTIKEMVTDNKHIGQANHDGYGRGYGYLTEKKEAPNTNKQFTCQEVYIAPLEGHQKPKSYEAAYNAETNERKEALFKYRSPTDSGVNMGPDPDMINLKLRNDNHESRDPNTGYSFNNSLDRFNPQISSKISNSIDSCRNIDPMLVGQLDSNPFNIKYNI.

The tract at residues 1-26 (MNFSNKPNKSRKKSNRKNKKSNKSNT) is disordered. Over residues 8 to 22 (NKSRKKSNRKNKKSN) the composition is skewed to basic residues.

The protein resides in the virion. This is an uncharacterized protein from Acanthamoeba polyphaga mimivirus (APMV).